We begin with the raw amino-acid sequence, 422 residues long: UDP-N-acetylglucosamine 1-carboxyvinyltransferase (422 aa).

24-25 (KN) contacts phosphoenolpyruvate. Arg93 is a binding site for UDP-N-acetyl-alpha-D-glucosamine. The active-site Proton donor is the Cys117. Residue Cys117 is modified to 2-(S-cysteinyl)pyruvic acid O-phosphothioketal. UDP-N-acetyl-alpha-D-glucosamine is bound by residues 122 to 126 (RPVDL), 162 to 165 (KVSV), Asp307, and Ile329.

It belongs to the EPSP synthase family. MurA subfamily.

It is found in the cytoplasm. The catalysed reaction is phosphoenolpyruvate + UDP-N-acetyl-alpha-D-glucosamine = UDP-N-acetyl-3-O-(1-carboxyvinyl)-alpha-D-glucosamine + phosphate. It participates in cell wall biogenesis; peptidoglycan biosynthesis. Functionally, cell wall formation. Adds enolpyruvyl to UDP-N-acetylglucosamine. In Vibrio atlanticus (strain LGP32) (Vibrio splendidus (strain Mel32)), this protein is UDP-N-acetylglucosamine 1-carboxyvinyltransferase.